The sequence spans 547 residues: Intercellular adhesion molecule 3 (547 aa).

An N-terminal signal peptide occupies residues 1-29 (MATMVPSVLWPRACWTLLVCCLLTPGVQG). Residues 30-485 (QEFLLRVEPQ…VMDIEAGSSH (456 aa)) lie on the Extracellular side of the membrane. Residues 46–103 (GGSLFVNCSTDCPSSEKIALETSLSKELVASGMGWAAFNLSNVTGNSRILCSVYCNGS) form the Ig-like C2-type 1 domain. N-linked (GlcNAc...) asparagine glycans are attached at residues Asn-52, Asn-84, Asn-87, Asn-101, Asn-110, and Asn-134. Cystine bridges form between Cys-53–Cys-96 and Cys-57–Cys-100. An Ig-like C2-type 2 domain is found at 132–197 (GQNFTLRCQV…FSCRTELDMQ (66 aa)). The cysteines at positions 139 and 190 are disulfide-linked. Asn-206, Asn-264, Asn-295, Asn-308, Asn-320, Asn-363, Asn-389, Asn-453, and Asn-457 each carry an N-linked (GlcNAc...) asparagine glycan. One can recognise an Ig-like C2-type 3 domain in the interval 234–301 (ETSWPVDCTL…IVCNVTLGGE (68 aa)). Cys-241 and Cys-294 form a disulfide bridge. In terms of domain architecture, Ig-like C2-type 4 spans 329–382 (GSTVTVSCMAGARVQVTLDGVPAAAPGQPAQLQLNATESDDGRSFFCSATLEVD). Cysteines 336 and 375 form a disulfide. The region spanning 416 to 469 (KTRHVLQCQARGNPYPELRCLKEGSSREVPVGIPFFVNVTHNGTYQCQASSSRG) is the Ig-like C2-type 5 domain. Cys-423 and Cys-462 are joined by a disulfide. A helical transmembrane segment spans residues 486 to 510 (FVPVFVAVLLTLGVVTIVLALMYVF). Residues 511–547 (REHQRSGSYHVREESTYLPLTSMQPTEAMGEEPSRAE) lie on the Cytoplasmic side of the membrane.

It belongs to the immunoglobulin superfamily. ICAM family. In terms of assembly, interacts with moesin/MSN. Post-translationally, upon stimulation by a physiologic stimuli becomes rapidly and transiently phosphorylated on serine residues. N-glycosylated; glycans consist of a mixture of tri- and tetra-antennary complex-type chains and high-mannose chains. In terms of tissue distribution, leukocytes.

It is found in the membrane. In terms of biological role, ICAM proteins are ligands for the leukocyte adhesion protein LFA-1 (integrin alpha-L/beta-2). ICAM3 is also a ligand for integrin alpha-D/beta-2. In association with integrin alpha-L/beta-2, contributes to apoptotic neutrophil phagocytosis by macrophages. The polypeptide is Intercellular adhesion molecule 3 (ICAM3) (Homo sapiens (Human)).